The primary structure comprises 1485 residues: Putative E3 ubiquitin-protein ligase LIN-1 (1485 aa).

Residues 337 to 353 (EENEDDSDSELENESVD) show a composition bias toward acidic residues. Disordered stretches follow at residues 337 to 363 (EENE…IFSP) and 384 to 417 (NQIP…KRDS). In terms of domain architecture, U-box spans 510 to 585 (KPPKDFVCPI…TSWKEQNPEL (76 aa)). WD repeat units lie at residues 1204 to 1241 (SSNG…PRVI), 1246 to 1283 (EHTK…IKCI), 1409 to 1448 (SLST…RVAS), and 1454 to 1485 (GHTK…WALD).

As to expression, expressed in roots and nodules, and at very low levels in calli and seedling shoots.

The enzyme catalyses S-ubiquitinyl-[E2 ubiquitin-conjugating enzyme]-L-cysteine + [acceptor protein]-L-lysine = [E2 ubiquitin-conjugating enzyme]-L-cysteine + N(6)-ubiquitinyl-[acceptor protein]-L-lysine.. The protein operates within protein modification; protein ubiquitination. Its function is as follows. Putative E3 ubiquitin-protein ligase involved in the rhizobial infection process. Plays an important role in the early steps of infection thread formation and in growth and differentiation of nodules. This chain is Putative E3 ubiquitin-protein ligase LIN-1, found in Lotus japonicus (Lotus corniculatus var. japonicus).